Reading from the N-terminus, the 180-residue chain is Large ribosomal subunit protein uL5c (180 aa).

It belongs to the universal ribosomal protein uL5 family. As to quaternary structure, part of the 50S ribosomal subunit; contacts the 5S rRNA.

Its subcellular location is the plastid. The protein localises to the chloroplast. Binds 5S rRNA, forms part of the central protuberance of the 50S subunit. In Stigeoclonium helveticum (Green alga), this protein is Large ribosomal subunit protein uL5c (rpl5).